A 2376-amino-acid polypeptide reads, in one-letter code: Cell morphogenesis protein PAG1 (2376 aa).

The tract at residues 1 to 30 is disordered; that stretch reads MASRFTFPPQRDQGIGFTFPPTNKAEGSSN. At Ser141 the chain carries Phosphoserine. The interval 275-294 is disordered; that stretch reads SSSNTTSKYKHNNNTNNLPG. Phosphoserine is present on Ser1144. Position 2264 is a phosphothreonine (Thr2264). Ser2267 and Ser2355 each carry phosphoserine.

To S.pombe mor2. As to quaternary structure, associates with CBK1.

Functionally, seems to play a role in cell morphogenesis. This chain is Cell morphogenesis protein PAG1 (TAO3), found in Saccharomyces cerevisiae (strain ATCC 204508 / S288c) (Baker's yeast).